We begin with the raw amino-acid sequence, 481 residues long: Ribosomal protein uS12 methylthiotransferase RimO (481 aa).

In terms of domain architecture, MTTase N-terminal spans 8–124; it reads MTVHLVSMGC…IAGRLRTILD (117 aa). [4Fe-4S] cluster contacts are provided by Cys17, Cys53, and Cys87. The disordered stretch occupies residues 148-188; it reads PTARAEVSVPGHGTAPDLSASVTPDSGPRATRRRLGTGPSA. The Radical SAM core domain maps to 182-413; sequence LGTGPSAPLK…DLTDELVSQR (232 aa). [4Fe-4S] cluster is bound by residues Cys196, Cys200, and Cys203. The TRAM domain maps to 415–480; sequence EDRIGTRGRV…GVDLVARPAN (66 aa).

This sequence belongs to the methylthiotransferase family. RimO subfamily. It depends on [4Fe-4S] cluster as a cofactor.

It is found in the cytoplasm. It carries out the reaction L-aspartate(89)-[ribosomal protein uS12]-hydrogen + (sulfur carrier)-SH + AH2 + 2 S-adenosyl-L-methionine = 3-methylsulfanyl-L-aspartate(89)-[ribosomal protein uS12]-hydrogen + (sulfur carrier)-H + 5'-deoxyadenosine + L-methionine + A + S-adenosyl-L-homocysteine + 2 H(+). In terms of biological role, catalyzes the methylthiolation of an aspartic acid residue of ribosomal protein uS12. The polypeptide is Ribosomal protein uS12 methylthiotransferase RimO (Cutibacterium acnes (strain DSM 16379 / KPA171202) (Propionibacterium acnes)).